A 157-amino-acid chain; its full sequence is Thiocyanate hydrolase subunit beta (157 aa).

In terms of assembly, heterododecamer consisting of 4 alpha, 4 beta, and 4 gamma subunits.

The catalysed reaction is thiocyanate + H2O + 2 H(+) = carbonyl sulfide + NH4(+). It participates in organosulfur degradation; thiocyanate degradation. Functionally, involved in the degradation of thiocyanate. The sequence is that of Thiocyanate hydrolase subunit beta (scnB) from Thiobacillus thioparus.